Consider the following 453-residue polypeptide: MSVLLVGVSHRTAPVPVLERVAVTDTDRPKLIDKLLASSHISEAMIVSTCNRVEVYAVVDAFHGALTEVGEILADHSGLDLTALHAHAYVRYSEAAVEHLFAVASGLDSMVIGEQQILGQIRSAYASSDAQQAAGRVVHELAQQALRVGKRVHSETGIDSAGASVVSVALDRAAGIIGEGGLVGRTAVVVGAGSMGGLSVAHLTRAGIARIVVVNRTQERAEHLAETARSNGVDADGVAFDQLSAAMAQADVMVTCTGAVGAVVTLADVHRALAEPDRDNTKHLVICDLGLPRDIDPAVAGLPGVTVLDMETLQRDPAAGAAASDADAARTIVAGELATYLAGQRLAEVTPTVTALRQRAADVVEAELMRLDSRLPGLDDPQRDEVARTVRRVVDKLLHAPTVRVKQLASAPGGDSYAAALRELFELSPGSPAAVATPTDLVDGDRTGRDLQA.

Substrate-binding positions include 49–52 (TCNR), Ser-109, 114–116 (EQQ), and Gln-120. The active-site Nucleophile is Cys-50. An NADP(+)-binding site is contributed by 191 to 196 (GAGSMG). Residues 432 to 453 (PAAVATPTDLVDGDRTGRDLQA) are disordered. The span at 443 to 453 (DGDRTGRDLQA) shows a compositional bias: basic and acidic residues.

Belongs to the glutamyl-tRNA reductase family. In terms of assembly, homodimer.

The enzyme catalyses (S)-4-amino-5-oxopentanoate + tRNA(Glu) + NADP(+) = L-glutamyl-tRNA(Glu) + NADPH + H(+). It functions in the pathway porphyrin-containing compound metabolism; protoporphyrin-IX biosynthesis; 5-aminolevulinate from L-glutamyl-tRNA(Glu): step 1/2. Functionally, catalyzes the NADPH-dependent reduction of glutamyl-tRNA(Glu) to glutamate 1-semialdehyde (GSA). In Rhodococcus erythropolis (strain PR4 / NBRC 100887), this protein is Glutamyl-tRNA reductase.